The chain runs to 277 residues: 3-methyl-2-oxobutanoate hydroxymethyltransferase (277 aa).

Residues D42 and D81 each coordinate Mg(2+). 3-methyl-2-oxobutanoate contacts are provided by residues 42-43, D81, and K110; that span reads DS. E112 serves as a coordination point for Mg(2+). The Proton acceptor role is filled by E179.

Belongs to the PanB family. Homodecamer; pentamer of dimers. The cofactor is Mg(2+).

Its subcellular location is the cytoplasm. It carries out the reaction 3-methyl-2-oxobutanoate + (6R)-5,10-methylene-5,6,7,8-tetrahydrofolate + H2O = 2-dehydropantoate + (6S)-5,6,7,8-tetrahydrofolate. The protein operates within cofactor biosynthesis; (R)-pantothenate biosynthesis; (R)-pantoate from 3-methyl-2-oxobutanoate: step 1/2. Catalyzes the reversible reaction in which hydroxymethyl group from 5,10-methylenetetrahydrofolate is transferred onto alpha-ketoisovalerate to form ketopantoate. This is 3-methyl-2-oxobutanoate hydroxymethyltransferase from Anaplasma marginale (strain Florida).